A 256-amino-acid chain; its full sequence is Ubiquinone/menaquinone biosynthesis C-methyltransferase UbiE (256 aa).

Residues threonine 79, aspartate 100, and 128-129 (DA) contribute to the S-adenosyl-L-methionine site.

Belongs to the class I-like SAM-binding methyltransferase superfamily. MenG/UbiE family.

It carries out the reaction a 2-demethylmenaquinol + S-adenosyl-L-methionine = a menaquinol + S-adenosyl-L-homocysteine + H(+). It catalyses the reaction a 2-methoxy-6-(all-trans-polyprenyl)benzene-1,4-diol + S-adenosyl-L-methionine = a 5-methoxy-2-methyl-3-(all-trans-polyprenyl)benzene-1,4-diol + S-adenosyl-L-homocysteine + H(+). The protein operates within quinol/quinone metabolism; menaquinone biosynthesis; menaquinol from 1,4-dihydroxy-2-naphthoate: step 2/2. It participates in cofactor biosynthesis; ubiquinone biosynthesis. Its function is as follows. Methyltransferase required for the conversion of demethylmenaquinol (DMKH2) to menaquinol (MKH2) and the conversion of 2-polyprenyl-6-methoxy-1,4-benzoquinol (DDMQH2) to 2-polyprenyl-3-methyl-6-methoxy-1,4-benzoquinol (DMQH2). In Pseudomonas savastanoi pv. phaseolicola (strain 1448A / Race 6) (Pseudomonas syringae pv. phaseolicola (strain 1448A / Race 6)), this protein is Ubiquinone/menaquinone biosynthesis C-methyltransferase UbiE.